We begin with the raw amino-acid sequence, 160 residues long: Ribosomal RNA large subunit methyltransferase H (160 aa).

2 residues coordinate S-adenosyl-L-methionine: Leu-76 and Gly-108.

This sequence belongs to the RNA methyltransferase RlmH family. In terms of assembly, homodimer.

The protein resides in the cytoplasm. The catalysed reaction is pseudouridine(1915) in 23S rRNA + S-adenosyl-L-methionine = N(3)-methylpseudouridine(1915) in 23S rRNA + S-adenosyl-L-homocysteine + H(+). Functionally, specifically methylates the pseudouridine at position 1915 (m3Psi1915) in 23S rRNA. This is Ribosomal RNA large subunit methyltransferase H from Rhodopseudomonas palustris (strain ATCC BAA-98 / CGA009).